The chain runs to 224 residues: Ribonuclease 3 (224 aa).

Residues 5 to 127 (LERLCRRLNY…ILAAIYLDGG (123 aa)) form the RNase III domain. Residue glutamate 40 participates in Mg(2+) binding. Aspartate 44 is an active-site residue. Mg(2+) is bound by residues aspartate 113 and glutamate 116. Glutamate 116 is an active-site residue. Positions 154 to 224 (DAKTQLQEFL…AKAMLEQLQG (71 aa)) constitute a DRBM domain.

Belongs to the ribonuclease III family. Homodimer. Mg(2+) serves as cofactor.

It is found in the cytoplasm. It catalyses the reaction Endonucleolytic cleavage to 5'-phosphomonoester.. In terms of biological role, digests double-stranded RNA. Involved in the processing of primary rRNA transcript to yield the immediate precursors to the large and small rRNAs (23S and 16S). Processes some mRNAs, and tRNAs when they are encoded in the rRNA operon. Processes pre-crRNA and tracrRNA of type II CRISPR loci if present in the organism. This chain is Ribonuclease 3, found in Legionella pneumophila (strain Paris).